The chain runs to 475 residues: Ribulose bisphosphate carboxylase large chain (475 aa).

A propeptide spanning residues 1–2 is cleaved from the precursor; sequence MS. Pro-3 is modified (N-acetylproline). At Lys-14 the chain carries N6,N6,N6-trimethyllysine. 2 residues coordinate substrate: Asn-123 and Thr-173. Lys-175 serves as the catalytic Proton acceptor. Residue Lys-177 participates in substrate binding. 3 residues coordinate Mg(2+): Lys-201, Asp-203, and Glu-204. Lys-201 carries the post-translational modification N6-carboxylysine. The active-site Proton acceptor is His-294. 3 residues coordinate substrate: Arg-295, His-327, and Ser-379.

This sequence belongs to the RuBisCO large chain family. Type I subfamily. In terms of assembly, heterohexadecamer of 8 large chains and 8 small chains; disulfide-linked. The disulfide link is formed within the large subunit homodimers. Mg(2+) is required as a cofactor. The disulfide bond which can form in the large chain dimeric partners within the hexadecamer appears to be associated with oxidative stress and protein turnover.

The protein resides in the plastid. It is found in the chloroplast. It carries out the reaction 2 (2R)-3-phosphoglycerate + 2 H(+) = D-ribulose 1,5-bisphosphate + CO2 + H2O. The enzyme catalyses D-ribulose 1,5-bisphosphate + O2 = 2-phosphoglycolate + (2R)-3-phosphoglycerate + 2 H(+). RuBisCO catalyzes two reactions: the carboxylation of D-ribulose 1,5-bisphosphate, the primary event in carbon dioxide fixation, as well as the oxidative fragmentation of the pentose substrate in the photorespiration process. Both reactions occur simultaneously and in competition at the same active site. This chain is Ribulose bisphosphate carboxylase large chain, found in Staurastrum punctulatum (Green alga).